Consider the following 276-residue polypeptide: Dermonecrotic toxin LlSicTox-alphaIV2iv (276 aa).

Histidine 5 is an active-site residue. 2 residues coordinate Mg(2+): glutamate 25 and aspartate 27. Residue histidine 41 is the Nucleophile of the active site. Disulfide bonds link cysteine 45–cysteine 51 and cysteine 47–cysteine 193. Position 85 (aspartate 85) interacts with Mg(2+).

It belongs to the arthropod phospholipase D family. Class II subfamily. It depends on Mg(2+) as a cofactor. In terms of tissue distribution, expressed by the venom gland.

Its subcellular location is the secreted. It carries out the reaction an N-(acyl)-sphingosylphosphocholine = an N-(acyl)-sphingosyl-1,3-cyclic phosphate + choline. The catalysed reaction is an N-(acyl)-sphingosylphosphoethanolamine = an N-(acyl)-sphingosyl-1,3-cyclic phosphate + ethanolamine. It catalyses the reaction a 1-acyl-sn-glycero-3-phosphocholine = a 1-acyl-sn-glycero-2,3-cyclic phosphate + choline. The enzyme catalyses a 1-acyl-sn-glycero-3-phosphoethanolamine = a 1-acyl-sn-glycero-2,3-cyclic phosphate + ethanolamine. Its function is as follows. Dermonecrotic toxins cleave the phosphodiester linkage between the phosphate and headgroup of certain phospholipids (sphingolipid and lysolipid substrates), forming an alcohol (often choline) and a cyclic phosphate. This toxin acts on sphingomyelin (SM). It may also act on ceramide phosphoethanolamine (CPE), lysophosphatidylcholine (LPC) and lysophosphatidylethanolamine (LPE), but not on lysophosphatidylserine (LPS), and lysophosphatidylglycerol (LPG). It acts by transphosphatidylation, releasing exclusively cyclic phosphate products as second products. Induces dermonecrosis, hemolysis, increased vascular permeability, edema, inflammatory response, and platelet aggregation. This is Dermonecrotic toxin LlSicTox-alphaIV2iv from Loxosceles laeta (South American recluse spider).